The chain runs to 316 residues: Pantothenate kinase (316 aa).

95 to 102 is a binding site for ATP; sequence GSVAVGKS.

It belongs to the prokaryotic pantothenate kinase family.

Its subcellular location is the cytoplasm. It carries out the reaction (R)-pantothenate + ATP = (R)-4'-phosphopantothenate + ADP + H(+). It functions in the pathway cofactor biosynthesis; coenzyme A biosynthesis; CoA from (R)-pantothenate: step 1/5. The protein is Pantothenate kinase of Shewanella oneidensis (strain ATCC 700550 / JCM 31522 / CIP 106686 / LMG 19005 / NCIMB 14063 / MR-1).